A 210-amino-acid polypeptide reads, in one-letter code: Thymidylate kinase (210 aa).

10–17 serves as a coordination point for ATP; it reads GLEGAGKT.

The protein belongs to the thymidylate kinase family.

The enzyme catalyses dTMP + ATP = dTDP + ADP. Its function is as follows. Phosphorylation of dTMP to form dTDP in both de novo and salvage pathways of dTTP synthesis. The protein is Thymidylate kinase of Erwinia tasmaniensis (strain DSM 17950 / CFBP 7177 / CIP 109463 / NCPPB 4357 / Et1/99).